Reading from the N-terminus, the 242-residue chain is Probable transcriptional regulatory protein NGO_1291 (242 aa).

It belongs to the TACO1 family.

The protein resides in the cytoplasm. This is Probable transcriptional regulatory protein NGO_1291 from Neisseria gonorrhoeae (strain ATCC 700825 / FA 1090).